Consider the following 194-residue polypeptide: Small ribosomal subunit protein uS7 (194 aa).

This sequence belongs to the universal ribosomal protein uS7 family. In terms of assembly, part of the 30S ribosomal subunit.

Functionally, one of the primary rRNA binding proteins, it binds directly to 16S rRNA where it nucleates assembly of the head domain of the 30S subunit. Is located at the subunit interface close to the decoding center. The sequence is that of Small ribosomal subunit protein uS7 from Methanospirillum hungatei JF-1 (strain ATCC 27890 / DSM 864 / NBRC 100397 / JF-1).